The primary structure comprises 240 residues: Tetrahydromethanopterin S-methyltransferase subunit A (240 aa).

Over 1 to 218 (MADKKEPAPG…KFHSGVHAGK (218 aa)) the chain is Cytoplasmic. 5-hydroxybenzimidazolylcob(I)amide is bound at residue His85. A helical transmembrane segment spans residues 219–239 (IEGAMIGLTVTISLLGLLLLG). Arg240 is a topological domain (extracellular).

The protein belongs to the MtrA family. As to quaternary structure, the complex is composed of 8 subunits; MtrA, MtrB, MtrC, MtrD, MtrE, MtrF, MtrG and MtrH. The cofactor is 5-hydroxybenzimidazolylcob(I)amide.

The protein localises to the cell membrane. It catalyses the reaction 5-methyl-5,6,7,8-tetrahydromethanopterin + coenzyme M + 2 Na(+)(in) = 5,6,7,8-tetrahydromethanopterin + methyl-coenzyme M + 2 Na(+)(out). It functions in the pathway one-carbon metabolism; methanogenesis from CO(2); methyl-coenzyme M from 5,10-methylene-5,6,7,8-tetrahydromethanopterin: step 2/2. Part of a complex that catalyzes the formation of methyl-coenzyme M and tetrahydromethanopterin from coenzyme M and methyl-tetrahydromethanopterin. This is an energy-conserving, sodium-ion translocating step. The protein is Tetrahydromethanopterin S-methyltransferase subunit A of Methanosarcina barkeri (strain Fusaro / DSM 804).